A 200-amino-acid polypeptide reads, in one-letter code: FMN-dependent NADH:quinone oxidoreductase (200 aa).

Residues Ser-10, 96-99 (MYNF), and 140-143 (SRGG) each bind FMN.

It belongs to the azoreductase type 1 family. Homodimer. FMN serves as cofactor.

It carries out the reaction 2 a quinone + NADH + H(+) = 2 a 1,4-benzosemiquinone + NAD(+). The enzyme catalyses N,N-dimethyl-1,4-phenylenediamine + anthranilate + 2 NAD(+) = 2-(4-dimethylaminophenyl)diazenylbenzoate + 2 NADH + 2 H(+). Quinone reductase that provides resistance to thiol-specific stress caused by electrophilic quinones. Its function is as follows. Also exhibits azoreductase activity. Catalyzes the reductive cleavage of the azo bond in aromatic azo compounds to the corresponding amines. This chain is FMN-dependent NADH:quinone oxidoreductase, found in Photorhabdus laumondii subsp. laumondii (strain DSM 15139 / CIP 105565 / TT01) (Photorhabdus luminescens subsp. laumondii).